We begin with the raw amino-acid sequence, 426 residues long: Gamma-glutamyl phosphate reductase (426 aa).

It belongs to the gamma-glutamyl phosphate reductase family.

Its subcellular location is the cytoplasm. It carries out the reaction L-glutamate 5-semialdehyde + phosphate + NADP(+) = L-glutamyl 5-phosphate + NADPH + H(+). It functions in the pathway amino-acid biosynthesis; L-proline biosynthesis; L-glutamate 5-semialdehyde from L-glutamate: step 2/2. In terms of biological role, catalyzes the NADPH-dependent reduction of L-glutamate 5-phosphate into L-glutamate 5-semialdehyde and phosphate. The product spontaneously undergoes cyclization to form 1-pyrroline-5-carboxylate. This is Gamma-glutamyl phosphate reductase from Deinococcus geothermalis (strain DSM 11300 / CIP 105573 / AG-3a).